We begin with the raw amino-acid sequence, 928 residues long: Eukaryotic translation initiation factor 3 subunit C (928 aa).

2 disordered regions span residues 1-37 (MSRF…SDDE) and 157-286 (FREA…EDGE). Positions 11 to 20 (SESESSEEEV) are enriched in acidic residues. The span at 22 to 33 (TQFNNKAQNFQF) shows a compositional bias: polar residues. Phosphoserine is present on residues Ser-34, Ser-165, Ser-177, and Ser-186. A compositionally biased stretch (acidic residues) spans 162–171 (DQESDVDEGE). Positions 172–184 (GDVHDSDADRAGD) are enriched in basic and acidic residues. Acidic residues predominate over residues 215–240 (DDDDSEDSIDWDPDTESETESSEDEN). The segment covering 245–264 (MRERFLKRTTEKEDKDDDKR) has biased composition (basic and acidic residues). The segment covering 265-277 (KDKRKEQKHKVRK) has biased composition (basic residues). The PCI domain occupies 656–832 (FHMHINLELL…ETVVMHRSEP (177 aa)). Residues 864-928 (FFQRGNMGNR…QQQVHTIDEE (65 aa)) are disordered. Residues 898-909 (QRNRNQRGHHKQ) are compositionally biased toward basic residues. The span at 910-921 (NQQQNQQQQQQQ) shows a compositional bias: low complexity.

Belongs to the eIF-3 subunit C family. Component of the eukaryotic translation initiation factor 3 (eIF-3) complex. The eIF-3 complex interacts with pix.

The protein resides in the cytoplasm. In terms of biological role, component of the eukaryotic translation initiation factor 3 (eIF-3) complex, which is involved in protein synthesis of a specialized repertoire of mRNAs and, together with other initiation factors, stimulates binding of mRNA and methionyl-tRNAi to the 40S ribosome. The eIF-3 complex specifically targets and initiates translation of a subset of mRNAs involved in cell proliferation. The chain is Eukaryotic translation initiation factor 3 subunit C from Drosophila grimshawi (Hawaiian fruit fly).